The sequence spans 241 residues: Major microneme antigen (241 aa).

Positions 1–34 are cleaved as a signal peptide; that stretch reads MTLPIHFPRCVLYGMASAVWSILFLHILVGDTMS. Positions 35 to 103 are excised as a propeptide; the sequence is AADALSWSGG…ATGRGPSFVH (69 aa). The span at 64 to 83 shows a compositional bias: basic and acidic residues; it reads GKELEQQHGGEEQQMQRDTK. Residues 64 to 90 form a disordered region; the sequence is GKELEQQHGGEEQQMQRDTKPAAFSNP. PAN domains are found at residues 112–181 and 185–241; these read CFPH…PRSC and CTDN…VERA. Intrachain disulfides connect cysteine 112–cysteine 181, cysteine 137–cysteine 159, cysteine 141–cysteine 147, cysteine 185–cysteine 189, cysteine 210–cysteine 230, and cysteine 214–cysteine 220. Serine 121 provides a ligand contact to a carbohydrate. Residues lysine 162, tyrosine 169, and aspartate 174 each coordinate a carbohydrate.

This sequence belongs to the microneme antigen family. Homodimer or heterodimer of major microneme antigen and microneme antigen. In terms of processing, contains six disulfide bonds.

The protein localises to the cytoplasmic vesicle. It is found in the secretory vesicle. Its subcellular location is the microneme. Functionally, galactose-binding lectin. Plays a role in adhesion to the host cell. Has a potential role in invasion of host cells. The protein is Major microneme antigen of Sarcocystis muris.